Reading from the N-terminus, the 514-residue chain is Cilia- and flagella-associated protein 53 (514 aa).

Residues Glu207–Leu429 are a coiled coil.

This sequence belongs to the CFAP53 family. As to quaternary structure, microtubule inner protein component of sperm flagellar doublet microtubules. Interacts with PIERCE1 and PIERCE2; the interactions link outer dynein arms docking complex (ODA-DC) to the internal microtubule inner proteins (MIP) in cilium axoneme. Interacts with CCDC38. Interacts with CCDC42 and IFT88. Interacts with centriolar satellite proteins PIBF1/CEP90 and PCM1. Interacts with dyneins DNAIC1, DNAIC2 AND DNAH11 and with ODA-DC component ODAD4/TTC25. In terms of tissue distribution, expressed in trachea multiciliated cells.

Its subcellular location is the cytoplasm. It localises to the cytoskeleton. The protein resides in the cilium axoneme. The protein localises to the flagellum axoneme. It is found in the microtubule organizing center. Its subcellular location is the centrosome. It localises to the centriolar satellite. The protein resides in the spindle pole. Microtubule inner protein (MIP) part of the dynein-decorated doublet microtubules (DMTs) in cilia axoneme, which is required for motile cilia beating. Regulates motility patterns of both 9+0 and 9+2 motile cilia through differential localization and recruitment of axonemal dynein components. Required for centriolar satellite integrity and non-motile cilium assembly. Required for motile cilium formation. Through its role in beating of primary cilia, involved in the establishment of organ laterality during embryogenesis. Required for sperm flagellum biogenesis and is essential for male fertility. The sequence is that of Cilia- and flagella-associated protein 53 (CFAP53) from Bos taurus (Bovine).